A 478-amino-acid polypeptide reads, in one-letter code: V-type proton ATPase subunit H (478 aa).

Belongs to the V-ATPase H subunit family. As to quaternary structure, V-ATPase is a heteromultimeric enzyme composed of a peripheral catalytic V1 complex (components A to H) attached to an integral membrane V0 proton pore complex (components: a, c, c', c'', d, e, f and VOA1). Interacts with YND1.

It localises to the vacuole membrane. Subunit of the V1 complex of vacuolar(H+)-ATPase (V-ATPase), a multisubunit enzyme composed of a peripheral complex (V1) that hydrolyzes ATP and a membrane integral complex (V0) that translocates protons. V-ATPase is responsible for acidifying and maintaining the pH of intracellular compartments. This subunit is essential for activity, but not assembly, of the enzyme complex. This subunit is also required for silencing the ATPase activity of V-ATPase when V1 is detached from V0. The sequence is that of V-type proton ATPase subunit H from Saccharomyces cerevisiae (strain ATCC 204508 / S288c) (Baker's yeast).